The chain runs to 321 residues: MQLAQMLIPMVSAFAITIMFMPLFIGYMRYKKEGQVIREEGPSWHEKKSGTPTMGGLIFIAAIIVSAIWVGIWQHQLTLSVWVSLFILVLYGLLGFYDDFEKLVHHRNEGLKAWQKLAGQILGAIIFLIAYFHEGFDHTLWVPIIGNVSAAWFYVLFVIVWLVGFSNAVNLTDGLDGLVAGQTTISFGTYAIIAAHDGRTDVLIVCLVTIGAMLGFLMFNHKPAQIFMGDLGSLALGGMLAVVAILLHREWSLLLIGIIYVTETASVILQVGSFKLTGKRIFLMSPIHHHFEMKGWSEWQIDLTFWLVGLIGSGIYLAFFL.

10 helical membrane passes run 6–26 (MLIP…LFIG), 53–73 (TMGG…VGIW), 77–97 (LTLS…LGFY), 121–141 (ILGA…HTLW), 144–164 (IIGN…WLVG), 175–195 (LDGL…IIAA), 200–220 (TDVL…LMFN), 226–246 (IFMG…VAIL), 251–271 (WSLL…ILQV), and 301–321 (IDLT…AFFL).

This sequence belongs to the glycosyltransferase 4 family. MraY subfamily. The cofactor is Mg(2+).

Its subcellular location is the cell membrane. It carries out the reaction UDP-N-acetyl-alpha-D-muramoyl-L-alanyl-gamma-D-glutamyl-L-lysyl-D-alanyl-D-alanine + di-trans,octa-cis-undecaprenyl phosphate = Mur2Ac(oyl-L-Ala-gamma-D-Glu-L-Lys-D-Ala-D-Ala)-di-trans,octa-cis-undecaprenyl diphosphate + UMP. Its pathway is cell wall biogenesis; peptidoglycan biosynthesis. In terms of biological role, catalyzes the initial step of the lipid cycle reactions in the biosynthesis of the cell wall peptidoglycan: transfers peptidoglycan precursor phospho-MurNAc-pentapeptide from UDP-MurNAc-pentapeptide onto the lipid carrier undecaprenyl phosphate, yielding undecaprenyl-pyrophosphoryl-MurNAc-pentapeptide, known as lipid I. The polypeptide is Phospho-N-acetylmuramoyl-pentapeptide-transferase (Lacticaseibacillus paracasei (strain ATCC 334 / BCRC 17002 / CCUG 31169 / CIP 107868 / KCTC 3260 / NRRL B-441) (Lactobacillus paracasei)).